The primary structure comprises 233 residues: Ribosome maturation factor RimP (233 aa).

The span at 167-179 (RGKAAEREKKRDL) shows a compositional bias: basic and acidic residues. Residues 167–233 (RGKAAEREKK…RARRGEIDPD (67 aa)) are disordered. Residues 187 to 196 (PHAKPAAQAK) are compositionally biased toward low complexity. The segment covering 220-233 (LAADRARRGEIDPD) has biased composition (basic and acidic residues).

It belongs to the RimP family.

The protein resides in the cytoplasm. Functionally, required for maturation of 30S ribosomal subunits. This chain is Ribosome maturation factor RimP, found in Bradyrhizobium sp. (strain ORS 278).